Reading from the N-terminus, the 706-residue chain is Polyribonucleotide nucleotidyltransferase (706 aa).

Residues aspartate 485 and aspartate 491 each coordinate Mg(2+). The region spanning 552-611 (PRMLKMKIHPDKIREVIGSGGKTINKIIEDTGVKIDIENDGTIFIAAQTQEAGELALSII) is the KH domain. In terms of domain architecture, S1 motif spans 621 to 689 (GDIFKGKVIK…QQGKVSLSRK (69 aa)).

This sequence belongs to the polyribonucleotide nucleotidyltransferase family. Mg(2+) is required as a cofactor.

Its subcellular location is the cytoplasm. The catalysed reaction is RNA(n+1) + phosphate = RNA(n) + a ribonucleoside 5'-diphosphate. Functionally, involved in mRNA degradation. Catalyzes the phosphorolysis of single-stranded polyribonucleotides processively in the 3'- to 5'-direction. This Alkaliphilus oremlandii (strain OhILAs) (Clostridium oremlandii (strain OhILAs)) protein is Polyribonucleotide nucleotidyltransferase.